The sequence spans 357 residues: Zinc finger protein 830 (357 aa).

A C2H2-type zinc finger spans residues 47–69 (CVVCNIQIKSELLWPAHILGKQH). 3 disordered regions span residues 98 to 126 (RKGS…TKLP), 157 to 194 (DDDE…ADRL), and 231 to 255 (ALPE…PKDQ). Positions 99-115 (KGSEPENQESKRIKGTE) are enriched in basic and acidic residues. Acidic residues predominate over residues 157-168 (DDDEVEGEEYEN). The span at 242–255 (ADAKVRKVDAPKDQ) shows a compositional bias: basic and acidic residues. Residues 279–325 (AEEDEEGRLDRQIDEIDEQIECYRRVEHLRDLKDTLQDAKMEVLKSK) are a coiled coil.

It localises to the nucleus. Its subcellular location is the chromosome. The protein localises to the nucleus speckle. Functionally, may act as an important regulator of the cell cycle that participates in the maintenance of genome integrity. The sequence is that of Zinc finger protein 830 from Xenopus tropicalis (Western clawed frog).